The primary structure comprises 431 residues: Serine/threonine-protein kinase SSN3 (431 aa).

Positions 27-355 (YQIIGYIAAG…ADNALVHPYF (329 aa)) constitute a Protein kinase domain. Residues 33–41 (IAAGTYGKV) and K59 contribute to the ATP site. Residue D174 is the Proton acceptor of the active site. The interval 397–431 (RHGGAYDDQHNNSNNNTNNSLNANNANNVPRKRAR) is disordered. Residues 407-424 (NNSNNNTNNSLNANNANN) are compositionally biased toward low complexity.

This sequence belongs to the protein kinase superfamily. CMGC Ser/Thr protein kinase family. CDC2/CDKX subfamily. Component of the srb8-11 complex, a regulatory module of the Mediator complex. The cofactor is Mg(2+).

It is found in the nucleus. The enzyme catalyses L-seryl-[protein] + ATP = O-phospho-L-seryl-[protein] + ADP + H(+). It carries out the reaction L-threonyl-[protein] + ATP = O-phospho-L-threonyl-[protein] + ADP + H(+). The catalysed reaction is [DNA-directed RNA polymerase] + ATP = phospho-[DNA-directed RNA polymerase] + ADP + H(+). In terms of biological role, component of the srb8-11 complex. The srb8-11 complex is a regulatory module of the Mediator complex which is itself dependent transcription. The srb8-11 complex may be involved in the transcriptional repression of a subset of genes regulated by Mediator. It may inhibit the association of the Mediator complex with RNA polymerase II to form the holoenzyme complex. The srb8-11 complex phosphorylates the C-terminal domain (CTD) of the largest subunit of RNA polymerase II. This chain is Serine/threonine-protein kinase SSN3 (SSN3), found in Scheffersomyces stipitis (strain ATCC 58785 / CBS 6054 / NBRC 10063 / NRRL Y-11545) (Yeast).